The primary structure comprises 412 residues: Short-chain specific acyl-CoA dehydrogenase, mitochondrial (412 aa).

A mitochondrion-targeting transit peptide spans 1–24 (MAAALLARASGPARRALCPRAWRQ). T27 carries the phosphothreonine modification. The residue at position 51 (K51) is an N6-acetyllysine; alternate. Residue K51 is modified to N6-succinyllysine; alternate. The residue at position 72 (K72) is an N6-acetyllysine. N6-acetyllysine; alternate is present on K129. N6-succinyllysine; alternate is present on K129. FAD is bound by residues 152-161 (FALSEPGNGS) and 185-187 (WIT). Substrate is bound at residue S161. Position 208 is an N6-acetyllysine (K208). An N6-acetyllysine; alternate modification is found at K262. At K262 the chain carries N6-succinyllysine; alternate. 269–272 (DMGR) is a binding site for substrate. R297 provides a ligand contact to FAD. At K306 the chain carries N6-acetyllysine; alternate. K306 carries the N6-succinyllysine; alternate modification. FAD contacts are provided by residues Q308 and 365–369 (QILGG). Residue E392 is the Proton acceptor of the active site. Residue G393 coordinates substrate. 394 to 396 (TSE) serves as a coordination point for FAD.

The protein belongs to the acyl-CoA dehydrogenase family. In terms of assembly, homotetramer. FAD serves as cofactor.

The protein localises to the mitochondrion matrix. The catalysed reaction is a short-chain 2,3-saturated fatty acyl-CoA + oxidized [electron-transfer flavoprotein] + H(+) = a short-chain (2E)-enoyl-CoA + reduced [electron-transfer flavoprotein]. The enzyme catalyses butanoyl-CoA + oxidized [electron-transfer flavoprotein] + H(+) = (2E)-butenoyl-CoA + reduced [electron-transfer flavoprotein]. It catalyses the reaction pentanoyl-CoA + oxidized [electron-transfer flavoprotein] + H(+) = (2E)-pentenoyl-CoA + reduced [electron-transfer flavoprotein]. It carries out the reaction hexanoyl-CoA + oxidized [electron-transfer flavoprotein] + H(+) = (2E)-hexenoyl-CoA + reduced [electron-transfer flavoprotein]. Its pathway is lipid metabolism; mitochondrial fatty acid beta-oxidation. In terms of biological role, short-chain specific acyl-CoA dehydrogenase is one of the acyl-CoA dehydrogenases that catalyze the first step of mitochondrial fatty acid beta-oxidation, an aerobic process breaking down fatty acids into acetyl-CoA and allowing the production of energy from fats. The first step of fatty acid beta-oxidation consists in the removal of one hydrogen from C-2 and C-3 of the straight-chain fatty acyl-CoA thioester, resulting in the formation of trans-2-enoyl-CoA. Among the different mitochondrial acyl-CoA dehydrogenases, short-chain specific acyl-CoA dehydrogenase acts specifically on acyl-CoAs with saturated 4 to 6 carbons long primary chains. The polypeptide is Short-chain specific acyl-CoA dehydrogenase, mitochondrial (ACADS) (Homo sapiens (Human)).